The sequence spans 410 residues: Ribosomal RNA large subunit methyltransferase G (410 aa).

The protein belongs to the methyltransferase superfamily. RlmG family.

It localises to the cytoplasm. It carries out the reaction guanosine(1835) in 23S rRNA + S-adenosyl-L-methionine = N(2)-methylguanosine(1835) in 23S rRNA + S-adenosyl-L-homocysteine + H(+). Specifically methylates the guanine in position 1835 (m2G1835) of 23S rRNA. This is Ribosomal RNA large subunit methyltransferase G from Alteromonas mediterranea (strain DSM 17117 / CIP 110805 / LMG 28347 / Deep ecotype).